A 260-amino-acid polypeptide reads, in one-letter code: Phosphatidylglycerol--prolipoprotein diacylglyceryl transferase (260 aa).

4 helical membrane-spanning segments follow: residues 17 to 37 (VVKW…SWIF), 52 to 72 (LTAA…LHVI), 85 to 105 (IFSG…IGLW), and 113 to 133 (FNLG…QAIG). Residue Arg-134 participates in a 1,2-diacyl-sn-glycero-3-phospho-(1'-sn-glycerol) binding. A run of 3 helical transmembrane segments spans residues 170 to 190 (APTQ…SLFI), 198 to 218 (GQLF…IGFV), and 227 to 247 (GLEQ…PLFI).

Belongs to the Lgt family.

The protein resides in the cell membrane. The catalysed reaction is L-cysteinyl-[prolipoprotein] + a 1,2-diacyl-sn-glycero-3-phospho-(1'-sn-glycerol) = an S-1,2-diacyl-sn-glyceryl-L-cysteinyl-[prolipoprotein] + sn-glycerol 1-phosphate + H(+). It functions in the pathway protein modification; lipoprotein biosynthesis (diacylglyceryl transfer). Its function is as follows. Catalyzes the transfer of the diacylglyceryl group from phosphatidylglycerol to the sulfhydryl group of the N-terminal cysteine of a prolipoprotein, the first step in the formation of mature lipoproteins. The sequence is that of Phosphatidylglycerol--prolipoprotein diacylglyceryl transferase from Dehalococcoides mccartyi (strain ATCC BAA-2100 / JCM 16839 / KCTC 5957 / BAV1).